The chain runs to 655 residues: UvrABC system protein C (655 aa).

The 80-residue stretch at 16 to 95 (TDPGVYRFRD…IKEFAPRYNL (80 aa)) folds into the GIY-YIG domain. Positions 207 to 242 (KRFIGTLEKQMAEAVAELDYERAARLRDDVIALRKV) constitute a UVR domain.

This sequence belongs to the UvrC family. Interacts with UvrB in an incision complex.

It localises to the cytoplasm. In terms of biological role, the UvrABC repair system catalyzes the recognition and processing of DNA lesions. UvrC both incises the 5' and 3' sides of the lesion. The N-terminal half is responsible for the 3' incision and the C-terminal half is responsible for the 5' incision. The sequence is that of UvrABC system protein C from Renibacterium salmoninarum (strain ATCC 33209 / DSM 20767 / JCM 11484 / NBRC 15589 / NCIMB 2235).